Consider the following 566-residue polypeptide: Beta,beta-carotene 15,15'-dioxygenase (566 aa).

Residues His-172, His-237, His-308, and His-514 each contribute to the Fe cation site. The tract at residues 529-566 is disordered; the sequence is TPAKTQEDENSDHPTGLTAPGLGHGENDFTAGHGGKSL.

Belongs to the carotenoid oxygenase family. Requires Fe(2+) as cofactor.

The protein localises to the cytoplasm. It is found in the cytosol. The enzyme catalyses all-trans-beta-carotene + O2 = 2 all-trans-retinal. It functions in the pathway cofactor metabolism; retinol metabolism. Functionally, symmetrically cleaves beta-carotene into two molecules of retinal using a dioxygenase mechanism. This is Beta,beta-carotene 15,15'-dioxygenase from Rattus norvegicus (Rat).